We begin with the raw amino-acid sequence, 417 residues long: Histidine--tRNA ligase (417 aa).

It belongs to the class-II aminoacyl-tRNA synthetase family. As to quaternary structure, homodimer.

It localises to the cytoplasm. The enzyme catalyses tRNA(His) + L-histidine + ATP = L-histidyl-tRNA(His) + AMP + diphosphate + H(+). The protein is Histidine--tRNA ligase of Caldanaerobacter subterraneus subsp. tengcongensis (strain DSM 15242 / JCM 11007 / NBRC 100824 / MB4) (Thermoanaerobacter tengcongensis).